Here is a 267-residue protein sequence, read N- to C-terminus: MGQKINPFGYRLGITENHRSKWFSDSNKAGERYRDFVLEDDQIRKEMSKDLERAGVSRIVIERTRDRVRVDIHTARPGIVIGRRGAEAERVRAKLEKLTGKQVQLNIFEVKNAALDAQLVAQGIAEQLTNRVTFRRAMRKAQQDAMRAGAKGIRIKLSGRLGGAEISRSEFYREGRVPLQTLRALIDYGFFEAKTTYGRIGVKVWIYKGDMTESEFEEQQAQQNNRPGRRGGDRRPRRGNRSAAPQAAEAPKAEAPAEAAPAAETKE.

The region spanning 43–111 is the KH type-2 domain; the sequence is IRKEMSKDLE…QVQLNIFEVK (69 aa). The disordered stretch occupies residues 216-267; it reads FEEQQAQQNNRPGRRGGDRRPRRGNRSAAPQAAEAPKAEAPAEAAPAAETKE. A compositionally biased stretch (low complexity) spans 241–267; that stretch reads RSAAPQAAEAPKAEAPAEAAPAAETKE.

Belongs to the universal ribosomal protein uS3 family. Part of the 30S ribosomal subunit. Forms a tight complex with proteins S10 and S14.

Its function is as follows. Binds the lower part of the 30S subunit head. Binds mRNA in the 70S ribosome, positioning it for translation. The chain is Small ribosomal subunit protein uS3 from Bifidobacterium longum subsp. infantis (strain ATCC 15697 / DSM 20088 / JCM 1222 / NCTC 11817 / S12).